The chain runs to 245 residues: Small ribosomal subunit protein uS2 (245 aa).

This sequence belongs to the universal ribosomal protein uS2 family.

This Pseudomonas putida (strain GB-1) protein is Small ribosomal subunit protein uS2.